A 454-amino-acid polypeptide reads, in one-letter code: Chromosomal replication initiator protein DnaA (454 aa).

A domain I, interacts with DnaA modulators region spans residues 1–77; sequence MASLNENQKF…GFEVFGRMID (77 aa). The domain II stretch occupies residues 77-115; it reads DYELYANDELTDIELRRLNNQSPVDEPLSVAKPTSPLVS. The tract at residues 116–332 is domain III, AAA+ region; it reads GLNEKYNFEN…GALNRVEFVA (217 aa). ATP is bound by residues glycine 160, glycine 162, lysine 163, and threonine 164. The domain IV, binds dsDNA stretch occupies residues 333–454; the sequence is RANGISIVDI…KDIDSIKRKF (122 aa).

This sequence belongs to the DnaA family. In terms of assembly, oligomerizes as a right-handed, spiral filament on DNA at oriC.

Its subcellular location is the cytoplasm. Functionally, plays an essential role in the initiation and regulation of chromosomal replication. ATP-DnaA binds to the origin of replication (oriC) to initiate formation of the DNA replication initiation complex once per cell cycle. Binds the DnaA box (a 9 base pair repeat at the origin) and separates the double-stranded (ds)DNA. Forms a right-handed helical filament on oriC DNA; dsDNA binds to the exterior of the filament while single-stranded (ss)DNA is stabiized in the filament's interior. The ATP-DnaA-oriC complex binds and stabilizes one strand of the AT-rich DNA unwinding element (DUE), permitting loading of DNA polymerase. After initiation quickly degrades to an ADP-DnaA complex that is not apt for DNA replication. Binds acidic phospholipids. In Lactococcus lactis subsp. cremoris (strain MG1363), this protein is Chromosomal replication initiator protein DnaA.